A 217-amino-acid polypeptide reads, in one-letter code: Octanoyltransferase (217 aa).

A BPL/LPL catalytic domain is found at 32–207; that stretch reads NDSPDELWIV…TLSQLLGYQH (176 aa). Substrate is bound by residues 71–78, 138–140, and 151–153; these read RGGQVTYH, SLG, and GLA. Cysteine 169 (acyl-thioester intermediate) is an active-site residue.

This sequence belongs to the LipB family.

Its subcellular location is the cytoplasm. It carries out the reaction octanoyl-[ACP] + L-lysyl-[protein] = N(6)-octanoyl-L-lysyl-[protein] + holo-[ACP] + H(+). It functions in the pathway protein modification; protein lipoylation via endogenous pathway; protein N(6)-(lipoyl)lysine from octanoyl-[acyl-carrier-protein]: step 1/2. In terms of biological role, catalyzes the transfer of endogenously produced octanoic acid from octanoyl-acyl-carrier-protein onto the lipoyl domains of lipoate-dependent enzymes. Lipoyl-ACP can also act as a substrate although octanoyl-ACP is likely to be the physiological substrate. In Shewanella oneidensis (strain ATCC 700550 / JCM 31522 / CIP 106686 / LMG 19005 / NCIMB 14063 / MR-1), this protein is Octanoyltransferase.